The sequence spans 180 residues: Putative 3-methyladenine DNA glycosylase (180 aa).

This sequence belongs to the DNA glycosylase MPG family.

This chain is Putative 3-methyladenine DNA glycosylase, found in Ehrlichia chaffeensis (strain ATCC CRL-10679 / Arkansas).